The primary structure comprises 105 residues: Photosystem II 5 kDa protein, chloroplastic (105 aa).

Residues 1–77 (MASITMTTSF…ICSVAGVATA (77 aa)) constitute a chloroplast transit peptide.

The maturation of the PSII-T precursor to its final form occurs through a two step process. First, a stromal intermediate is formed, which, upon translocation into the thylakoid membrane, is processed to the mature protein.

Its subcellular location is the plastid. The protein resides in the chloroplast thylakoid membrane. May be a component of the oxygen-evolving complex. The polypeptide is Photosystem II 5 kDa protein, chloroplastic (PSBT) (Gossypium hirsutum (Upland cotton)).